We begin with the raw amino-acid sequence, 119 residues long: Large ribosomal subunit protein uL14 (119 aa).

Belongs to the universal ribosomal protein uL14 family. As to quaternary structure, part of the 50S ribosomal subunit. Forms a cluster with proteins L3 and L19. In the 70S ribosome, L14 and L19 interact and together make contacts with the 16S rRNA in bridges B5 and B8.

Binds to 23S rRNA. Forms part of two intersubunit bridges in the 70S ribosome. This chain is Large ribosomal subunit protein uL14, found in Wolbachia pipientis subsp. Culex pipiens (strain wPip).